Here is a 944-residue protein sequence, read N- to C-terminus: Trehalose monomycolate exporter MmpL3 (944 aa).

The Cytoplasmic segment spans residues 1–13 (MFAWWGRTVYRYR). Residues 14–34 (FIVIGVMVALCLGGGVFGLSL) form a helical membrane-spanning segment. Over 35–185 (GKHVTQSGFY…TIATDQRRME (151 aa)) the chain is Periplasmic. A 1,2-diacylglycero-3-phosphoethanolamine is bound at residue 40–44 (QSGFY). Residues 186–206 (VLALPLVAVVLFFVFGGVIAA) form a helical membrane-spanning segment. Topologically, residues 207 to 209 (GLP) are cytoplasmic. The chain crosses the membrane as a helical span at residues 210–230 (VMVGGLCIAGALGIMRFLAIF). Residues 231–235 (GPVHY) lie on the Periplasmic side of the membrane. A helical membrane pass occupies residues 236 to 256 (FAQPVVSLIGLGIAIDYGLFI). Over 257–286 (VSRFREEIAEGYDTETAVRRTVITAGRTVT) the chain is Cytoplasmic. A helical membrane pass occupies residues 287 to 307 (FSAVLIVASAIGLLLFPQGFL). Residues 308–314 (KSLTYAT) lie on the Periplasmic side of the membrane. Residues 315–335 (IASVMLSAILSITVLPACLGI) traverse the membrane as a helical segment. At 336 to 396 (LGKHVDALGV…KLVNRVMKRP (61 aa)) the chain is on the cytoplasmic side. A helical transmembrane segment spans residues 397-417 (VLFAAPIVIIMILLIIPVGKL). Residues 418-562 (SLGGISEKYL…HGLFAKMPLM (145 aa)) are Periplasmic-facing. A helical membrane pass occupies residues 563–583 (VVILLTTTIVLMFLAFGSVVL). The Cytoplasmic portion of the chain corresponds to 584–586 (PIK). Residues 587-607 (ATLMSALTLGSTMGILTWIFV) traverse the membrane as a helical segment. Residues 608–616 (DGHFSKWLN) are Periplasmic-facing. The helical transmembrane segment at 617–637 (FTPTPLTAPVIGLIIALVFGL) threads the bilayer. Topologically, residues 638–672 (STDYEVFLVSRMVEARERGMSTQEAIRIGTAATGR) are cytoplasmic. A helical transmembrane segment spans residues 673–693 (IITAAALIVAVVAGAFVFSDL). Residues 694–698 (VMMKY) lie on the Periplasmic side of the membrane. The chain crosses the membrane as a helical span at residues 699-719 (LAFGLMAALLLDATVVRMFLV). Topologically, residues 720–944 (PSVMKLLGDD…QDLLRREGRL (225 aa)) are cytoplasmic. The disordered stretch occupies residues 778–944 (AAGDPRPPHD…QDLLRREGRL (167 aa)). Residues 791 to 828 (PLAESPRPARSSPASSPELTPALEATAAPAAPSGASTT) show a composition bias toward low complexity. Over residues 829 to 839 (RMQIGSSTEPP) the composition is skewed to polar residues. The span at 855 to 866 (STPPPTPTPPSA) shows a compositional bias: pro residues.

This sequence belongs to the resistance-nodulation-cell division (RND) (TC 2.A.6) family. MmpL subfamily. As to quaternary structure, monomer. Interacts with TtfA (via N-terminus); active trehalose monomycolate (TMM) biosynthesis is not required for the complex formation.

The protein localises to the cell inner membrane. Its subcellular location is the cell septum. The protein resides in the cell tip. Its function is as follows. Transports trehalose monomycolate (TMM) to the cell wall. Flips TMM across the inner membrane. Membrane potential is not required for this function. Transports probably phosphatidylethanolamine (PE) as well. Binds specifically both TMM and PE, but not trehalose dimycolate (TDM). Also binds diacylglycerol (DAG) and other phospholipids, including phosphatidylglycerol (PG), phosphatidylinositol (PI), and cardiolipin (CDL). Contributes to membrane potential, cell wall composition, antibiotic susceptibility and fitness. Could also be part of a heme-iron acquisition system. This Mycobacterium tuberculosis (strain CDC 1551 / Oshkosh) protein is Trehalose monomycolate exporter MmpL3 (mmpL3).